The chain runs to 396 residues: Calsequestrin-1 (396 aa).

A signal peptide spans 1–34; the sequence is MSATDRMGPRAVPGLRLALLLLLVLGTPKSGVQG. At Tyr-43 the chain carries Phosphotyrosine. Ser-81 is subject to Phosphoserine. A Phosphothreonine modification is found at Thr-124. Residue Ser-216 is modified to Phosphoserine. N-linked (GlcNAc...) asparagine glycosylation occurs at Asn-350.

Belongs to the calsequestrin family. As to quaternary structure, monomer; increases in response to a depletion of intracellular calcium. Homodimer. Homotetramer and homopolymer. Can form linear homooligomers. Ca(2+) ions promote oligomerization. Interacts (via C-terminal end and preferentially with the monomeric form) with STIM1; this interaction increases in response to a depletion of intracellular calcium, decreases both STIM1 aggregation and clustering, interaction of STIM1 with ORAI1 and store-operated Ca(2+) entry (SOCE) activity. Interacts with ASPH and TRDN. N-glycosylated. In terms of tissue distribution, expressed in myoblasts (at protein level).

The protein resides in the endoplasmic reticulum. Its subcellular location is the sarcoplasmic reticulum. The protein localises to the sarcoplasmic reticulum lumen. It is found in the sarcoplasmic reticulum membrane. It localises to the mitochondrion matrix. In terms of biological role, calsequestrin is a high-capacity, moderate affinity, calcium-binding protein and thus acts as an internal calcium store in muscle. Calcium ions are bound by clusters of acidic residues at the protein surface, often at the interface between subunits. Can bind around 80 Ca(2+) ions. Regulates the release of lumenal Ca(2+) via the calcium release channel RYR1; this plays an important role in triggering muscle contraction. Negatively regulates store-operated Ca(2+) entry (SOCE) activity. The chain is Calsequestrin-1 (CASQ1) from Homo sapiens (Human).